Reading from the N-terminus, the 142-residue chain is Large-conductance mechanosensitive channel (142 aa).

3 consecutive transmembrane segments (helical) span residues 14–34, 38–58, and 82–102; these read VMDLAVGVIIGAAFTKIVTSV, LVMPIVGAITGGGFDFSNYFL, and GSFITVLINFMILAWIIFLLV.

This sequence belongs to the MscL family. Homopentamer.

It localises to the cell inner membrane. Channel that opens in response to stretch forces in the membrane lipid bilayer. May participate in the regulation of osmotic pressure changes within the cell. The chain is Large-conductance mechanosensitive channel from Sinorhizobium fredii (strain NBRC 101917 / NGR234).